Consider the following 378-residue polypeptide: MIDYEFLRFIWWVLVIVLLIGFSVTDGFDMGVTALLPVIGKKEVERRIMINTIAPHWDGNQVWLLTAGGAIFAAWPIVYAVSFSGFYIALVLVLAALFLRPLGFEYRAKIDNPTWRSVWDWGLFAGGFVPALVFGVAFGNLLQGVPFHFNELTQVTYTGSFFELLNPFALLCGVISLSMLVTHGANWLQMKTTEALRDRARTVSQIGSIVTLIAFVLAGVWLYSKDGYVVTSTIDHFAPSSPMNKEVAVETGAWFRNFNEMPILWIFPALAVVAALLNAAFSKANRCGFAFFFSALTMAGVIITAAVSMFPFVMPSSSHPEQSLLMWDSTSSELTLTLMLIFAVVFVVIALAYTIWSYSKMFGRLDANFIDKNKHSLY.

Residues 1–8 (MIDYEFLR) lie on the Cytoplasmic side of the membrane. The chain crosses the membrane as a helical span at residues 9–28 (FIWWVLVIVLLIGFSVTDGF). Over 29–79 (DMGVTALLPVIGKKEVERRIMINTIAPHWDGNQVWLLTAGGAIFAAWPIVY) the chain is Periplasmic. The helical transmembrane segment at 80–99 (AVSFSGFYIALVLVLAALFL) threads the bilayer. Over 100 to 122 (RPLGFEYRAKIDNPTWRSVWDWG) the chain is Cytoplasmic. A helical membrane pass occupies residues 123 to 142 (LFAGGFVPALVFGVAFGNLL). Residues 143-164 (QGVPFHFNELTQVTYTGSFFEL) are Periplasmic-facing. The helical transmembrane segment at 165 to 184 (LNPFALLCGVISLSMLVTHG) threads the bilayer. Residues 185-205 (ANWLQMKTTEALRDRARTVSQ) are Cytoplasmic-facing. A helical membrane pass occupies residues 206-224 (IGSIVTLIAFVLAGVWLYS). At 225-261 (KDGYVVTSTIDHFAPSSPMNKEVAVETGAWFRNFNEM) the chain is on the periplasmic side. Residues 262 to 281 (PILWIFPALAVVAALLNAAF) traverse the membrane as a helical segment. Over 282–291 (SKANRCGFAF) the chain is Cytoplasmic. A helical transmembrane segment spans residues 292–311 (FFSALTMAGVIITAAVSMFP). Topologically, residues 312 to 335 (FVMPSSSHPEQSLLMWDSTSSELT) are periplasmic. A helical membrane pass occupies residues 336–355 (LTLMLIFAVVFVVIALAYTI). Topologically, residues 356–378 (WSYSKMFGRLDANFIDKNKHSLY) are cytoplasmic.

It belongs to the cytochrome ubiquinol oxidase subunit 2 family. In terms of assembly, heterodimer of subunits I and II.

The protein resides in the cell inner membrane. Its function is as follows. Probable cytochrome oxidase subunit. The protein is Probable cytochrome oxidase subunit 2 of Haemophilus influenzae (strain ATCC 51907 / DSM 11121 / KW20 / Rd).